A 595-amino-acid polypeptide reads, in one-letter code: Elongation factor 4 (595 aa).

The tr-type G domain occupies serine 2–threonine 184. GTP is bound by residues aspartate 14–threonine 19 and asparagine 131–aspartate 134.

It belongs to the TRAFAC class translation factor GTPase superfamily. Classic translation factor GTPase family. LepA subfamily.

The protein resides in the cell inner membrane. The enzyme catalyses GTP + H2O = GDP + phosphate + H(+). Its function is as follows. Required for accurate and efficient protein synthesis under certain stress conditions. May act as a fidelity factor of the translation reaction, by catalyzing a one-codon backward translocation of tRNAs on improperly translocated ribosomes. Back-translocation proceeds from a post-translocation (POST) complex to a pre-translocation (PRE) complex, thus giving elongation factor G a second chance to translocate the tRNAs correctly. Binds to ribosomes in a GTP-dependent manner. The chain is Elongation factor 4 from Pseudomonas savastanoi pv. phaseolicola (strain 1448A / Race 6) (Pseudomonas syringae pv. phaseolicola (strain 1448A / Race 6)).